Consider the following 107-residue polypeptide: uncharacterized protein (107 aa).

Its subcellular location is the mitochondrion. This is an uncharacterized protein from Arabidopsis thaliana (Mouse-ear cress).